Reading from the N-terminus, the 120-residue chain is Glycine cleavage system H protein (120 aa).

In terms of domain architecture, Lipoyl-binding spans 17–99 (VATVGITAHA…QGAGWLYRLK (83 aa)). At lysine 58 the chain carries N6-lipoyllysine.

It belongs to the GcvH family. The glycine cleavage system is composed of four proteins: P, T, L and H. Requires (R)-lipoate as cofactor.

The glycine cleavage system catalyzes the degradation of glycine. The H protein shuttles the methylamine group of glycine from the P protein to the T protein. The polypeptide is Glycine cleavage system H protein (Methylorubrum populi (strain ATCC BAA-705 / NCIMB 13946 / BJ001) (Methylobacterium populi)).